Reading from the N-terminus, the 466-residue chain is Triplex capsid protein 1 (466 aa).

Residues M1–G29 are disordered.

The protein belongs to the herpesviridae TRX1 protein family. As to quaternary structure, interacts with TRX2, MCP and capsid vertex component 2/CVC2.

It localises to the virion. The protein resides in the host nucleus. Its function is as follows. Structural component of the T=16 icosahedral capsid. The capsid is composed of pentamers and hexamers of major capsid protein/MCP, which are linked together by heterotrimers called triplexes. These triplexes are formed by a single molecule of triplex protein 1/TRX1 and two copies of triplex protein 2/TRX2. Additionally, TRX1 is required for efficient transport of TRX2 to the nucleus, which is the site of capsid assembly. The sequence is that of Triplex capsid protein 1 from Homo sapiens (Human).